The chain runs to 262 residues: Phosphoribosylformylglycinamidine synthase subunit PurQ (262 aa).

The Glutamine amidotransferase type-1 domain maps to 2-238 (RIAVIQFPGT…FAWQLPRKHP (237 aa)). The active-site Nucleophile is the Cys87. Residues His223 and Glu225 contribute to the active site.

Part of the FGAM synthase complex composed of 1 PurL, 1 PurQ and 2 PurS subunits.

The protein localises to the cytoplasm. The catalysed reaction is N(2)-formyl-N(1)-(5-phospho-beta-D-ribosyl)glycinamide + L-glutamine + ATP + H2O = 2-formamido-N(1)-(5-O-phospho-beta-D-ribosyl)acetamidine + L-glutamate + ADP + phosphate + H(+). It carries out the reaction L-glutamine + H2O = L-glutamate + NH4(+). The protein operates within purine metabolism; IMP biosynthesis via de novo pathway; 5-amino-1-(5-phospho-D-ribosyl)imidazole from N(2)-formyl-N(1)-(5-phospho-D-ribosyl)glycinamide: step 1/2. Functionally, part of the phosphoribosylformylglycinamidine synthase complex involved in the purines biosynthetic pathway. Catalyzes the ATP-dependent conversion of formylglycinamide ribonucleotide (FGAR) and glutamine to yield formylglycinamidine ribonucleotide (FGAM) and glutamate. The FGAM synthase complex is composed of three subunits. PurQ produces an ammonia molecule by converting glutamine to glutamate. PurL transfers the ammonia molecule to FGAR to form FGAM in an ATP-dependent manner. PurS interacts with PurQ and PurL and is thought to assist in the transfer of the ammonia molecule from PurQ to PurL. This chain is Phosphoribosylformylglycinamidine synthase subunit PurQ, found in Methanothrix thermoacetophila (strain DSM 6194 / JCM 14653 / NBRC 101360 / PT) (Methanosaeta thermophila).